Reading from the N-terminus, the 69-residue chain is uncharacterized protein (69 aa).

At 1–15 (MLLYIVIIVACIISK) the chain is on the cytoplasmic side. A helical membrane pass occupies residues 16-36 (LVPNEYWAIHLFFIIMIFMVY). At 37 to 69 (MYKKLDIHQKYQFWNYTMSGLSGHNVQVTCKCY) the chain is on the extracellular side. Asparagine 51 is a glycosylation site (N-linked (GlcNAc...) asparagine; by host).

Belongs to the asfivirus X69R family.

Its subcellular location is the host membrane. This is an uncharacterized protein from African swine fever virus (isolate Tick/Malawi/Lil 20-1/1983) (ASFV).